A 1380-amino-acid chain; its full sequence is DNA-directed RNA polymerase subunit beta (1380 aa).

The protein belongs to the RNA polymerase beta chain family. In terms of assembly, the RNAP catalytic core consists of 2 alpha, 1 beta, 1 beta' and 1 omega subunit. When a sigma factor is associated with the core the holoenzyme is formed, which can initiate transcription.

It catalyses the reaction RNA(n) + a ribonucleoside 5'-triphosphate = RNA(n+1) + diphosphate. Functionally, DNA-dependent RNA polymerase catalyzes the transcription of DNA into RNA using the four ribonucleoside triphosphates as substrates. In Nitrobacter hamburgensis (strain DSM 10229 / NCIMB 13809 / X14), this protein is DNA-directed RNA polymerase subunit beta.